The chain runs to 469 residues: Adenosylhomocysteinase (469 aa).

Substrate-binding residues include Thr-60, Asp-135, and Glu-195. 196–198 (TTT) serves as a coordination point for NAD(+). Substrate-binding residues include Lys-225 and Asp-229. NAD(+)-binding positions include Asn-230, 259 to 264 (GYGDVG), Glu-282, Asn-317, 338 to 340 (IGH), and Asn-383.

The protein belongs to the adenosylhomocysteinase family. Requires NAD(+) as cofactor.

The protein localises to the cytoplasm. The catalysed reaction is S-adenosyl-L-homocysteine + H2O = L-homocysteine + adenosine. Its pathway is amino-acid biosynthesis; L-homocysteine biosynthesis; L-homocysteine from S-adenosyl-L-homocysteine: step 1/1. Its function is as follows. May play a key role in the regulation of the intracellular concentration of adenosylhomocysteine. This Maricaulis maris (strain MCS10) (Caulobacter maris) protein is Adenosylhomocysteinase.